An 812-amino-acid chain; its full sequence is Probable inorganic carbon transporter subunit DabA (812 aa).

Positions 337, 339, 499, and 514 each coordinate Zn(2+).

It belongs to the inorganic carbon transporter (TC 9.A.2) DabA family. In terms of assembly, forms a complex with DabB. The cofactor is Zn(2+).

It localises to the cell inner membrane. Part of an energy-coupled inorganic carbon pump. This chain is Probable inorganic carbon transporter subunit DabA, found in Xanthomonas oryzae pv. oryzae (strain KACC10331 / KXO85).